The primary structure comprises 509 residues: Maturase K (509 aa).

The protein belongs to the intron maturase 2 family. MatK subfamily.

The protein localises to the plastid. The protein resides in the chloroplast. In terms of biological role, usually encoded in the trnK tRNA gene intron. Probably assists in splicing its own and other chloroplast group II introns. The chain is Maturase K from Nicotiana tomentosiformis (Tobacco).